Reading from the N-terminus, the 193-residue chain is Acyl carrier protein phosphodiesterase (193 aa).

The protein belongs to the AcpH family.

The enzyme catalyses holo-[ACP] + H2O = apo-[ACP] + (R)-4'-phosphopantetheine + H(+). Converts holo-ACP to apo-ACP by hydrolytic cleavage of the phosphopantetheine prosthetic group from ACP. This chain is Acyl carrier protein phosphodiesterase, found in Enterobacter sp. (strain 638).